Consider the following 288-residue polypeptide: NGG1-interacting factor 3 (288 aa).

Belongs to the GTP cyclohydrolase I type 2/NIF3 family. In terms of assembly, may interact with NGG1.

It localises to the mitochondrion. The polypeptide is NGG1-interacting factor 3 (Saccharomyces cerevisiae (strain ATCC 204508 / S288c) (Baker's yeast)).